Here is a 512-residue protein sequence, read N- to C-terminus: GMP synthase [glutamine-hydrolyzing] (512 aa).

Residues 9–198 (GVLVVDFGGQ…WLSLVGAPRT (190 aa)) enclose the Glutamine amidotransferase type-1 domain. Cys-87 serves as the catalytic Nucleophile. Residues His-173 and Glu-175 contribute to the active site. In terms of domain architecture, GMPS ATP-PPase spans 199-387 (WRPGDMVSEL…LGVPRELIWK (189 aa)). Residue 226-232 (SGGVDST) coordinates ATP.

It carries out the reaction XMP + L-glutamine + ATP + H2O = GMP + L-glutamate + AMP + diphosphate + 2 H(+). It participates in purine metabolism; GMP biosynthesis; GMP from XMP (L-Gln route): step 1/1. In terms of biological role, catalyzes the synthesis of GMP from XMP. This is GMP synthase [glutamine-hydrolyzing] (guaA) from Aeropyrum pernix (strain ATCC 700893 / DSM 11879 / JCM 9820 / NBRC 100138 / K1).